Here is a 155-residue protein sequence, read N- to C-terminus: SsrA-binding protein (155 aa).

Belongs to the SmpB family.

It is found in the cytoplasm. Functionally, required for rescue of stalled ribosomes mediated by trans-translation. Binds to transfer-messenger RNA (tmRNA), required for stable association of tmRNA with ribosomes. tmRNA and SmpB together mimic tRNA shape, replacing the anticodon stem-loop with SmpB. tmRNA is encoded by the ssrA gene; the 2 termini fold to resemble tRNA(Ala) and it encodes a 'tag peptide', a short internal open reading frame. During trans-translation Ala-aminoacylated tmRNA acts like a tRNA, entering the A-site of stalled ribosomes, displacing the stalled mRNA. The ribosome then switches to translate the ORF on the tmRNA; the nascent peptide is terminated with the 'tag peptide' encoded by the tmRNA and targeted for degradation. The ribosome is freed to recommence translation, which seems to be the essential function of trans-translation. The protein is SsrA-binding protein of Streptococcus pneumoniae (strain 70585).